The chain runs to 222 residues: Cysteine protease inhibitor 1 (222 aa).

The N-terminal stretch at 1–26 (MKSINILSFLLLSSTLSLVAFARSFT) is a signal peptide. The propeptide occupies 27-42 (SENPIVLPTTCHDDDN). The Vacuolar targeting signal signature appears at 29–34 (NPIVLP). 2 cysteine pairs are disulfide-bonded: Cys84/Cys136 and Cys185/Cys191.

This sequence belongs to the protease inhibitor I3 (leguminous Kunitz-type inhibitor) family. As to expression, tubers, leaves.

It localises to the vacuole. In terms of biological role, potent inhibitor of cathepsin l (cysteine protease). Does not inhibit trypsin or chymotrypsin (serine proteases). May protect the plant by inhibiting proteases of invading organisms. The protein is Cysteine protease inhibitor 1 of Solanum tuberosum (Potato).